The chain runs to 879 residues: Alanine--tRNA ligase (879 aa).

Zn(2+) is bound by residues H567, H571, C669, and H673.

It belongs to the class-II aminoacyl-tRNA synthetase family. Zn(2+) serves as cofactor.

The protein localises to the cytoplasm. It carries out the reaction tRNA(Ala) + L-alanine + ATP = L-alanyl-tRNA(Ala) + AMP + diphosphate. Its function is as follows. Catalyzes the attachment of alanine to tRNA(Ala) in a two-step reaction: alanine is first activated by ATP to form Ala-AMP and then transferred to the acceptor end of tRNA(Ala). Also edits incorrectly charged Ser-tRNA(Ala) and Gly-tRNA(Ala) via its editing domain. This is Alanine--tRNA ligase from Levilactobacillus brevis (strain ATCC 367 / BCRC 12310 / CIP 105137 / JCM 1170 / LMG 11437 / NCIMB 947 / NCTC 947) (Lactobacillus brevis).